The primary structure comprises 183 residues: Ribosome-recycling factor (183 aa).

It belongs to the RRF family.

It is found in the cytoplasm. Functionally, responsible for the release of ribosomes from messenger RNA at the termination of protein biosynthesis. May increase the efficiency of translation by recycling ribosomes from one round of translation to another. This is Ribosome-recycling factor from Afipia carboxidovorans (strain ATCC 49405 / DSM 1227 / KCTC 32145 / OM5) (Oligotropha carboxidovorans).